The chain runs to 870 residues: A-kinase anchor protein 2 (870 aa).

Disordered stretches follow at residues 14–43 and 103–165; these read PGIT…DHHE and IEKA…SSRD. At S122 the chain carries Phosphoserine. A compositionally biased stretch (polar residues) spans 133–151; the sequence is GHSTDQPQDMLGNSLQAPA. S152 bears the Phosphoserine mark. A compositionally biased stretch (low complexity) spans 152-161; that stretch reads SPSSSTSSHC. K174 participates in a covalent cross-link: Glycyl lysine isopeptide (Lys-Gly) (interchain with G-Cter in SUMO1); alternate. Residue K174 forms a Glycyl lysine isopeptide (Lys-Gly) (interchain with G-Cter in SUMO2); alternate linkage. Residues 213 to 307 are a coiled coil; the sequence is EEMIELEKER…QQQQLSTSQL (95 aa). Positions 233-324 are disordered; it reads KNPGIAAKWW…EHLDSIEHTK (92 aa). The segment covering 259 to 274 has biased composition (basic and acidic residues); the sequence is LESHRKYKERKEKRAQ. Positions 275 to 302 are enriched in low complexity; sequence QEQLQLQQQQQQQLQQLQQLQQQQQQQL. The span at 313 to 324 shows a compositional bias: basic and acidic residues; sequence AHEHLDSIEHTK. S347 bears the Phosphoserine mark. A disordered region spans residues 409-436; it reads ESQSAGAGTGNAATQGKEGPYSEPSKRG. The span at 410 to 424 shows a compositional bias: low complexity; sequence SQSAGAGTGNAATQG. 3 positions are modified to phosphoserine: S472, S476, and S528. Polar residues predominate over residues 506-543; that stretch reads FSMDNISDSGASNETPNALQENSLADFSLPQTPQTDNP. Disordered stretches follow at residues 506–577 and 595–688; these read FSMD…DPLE and QVDK…RPEG. T537 is modified (phosphothreonine). The tract at residues 576–589 is PKA-RII subunit binding domain; it reads LEYQAGLLVQNAIQ. A compositionally biased stretch (basic and acidic residues) spans 595–608; sequence QVDKAEVHTSKEGS. Phosphoserine is present on S641. Residues 644–665 are compositionally biased toward basic and acidic residues; the sequence is QEKRDVLPKILPGEDKTLREKG. The stretch at 720 to 755 forms a coiled coil; the sequence is KLRSRKQRTLSMIEEEIRAAQEREEELKRQRQVRQS. Residues S730, S758, S789, and S796 each carry the phosphoserine modification. Residues 740–814 are disordered; that stretch reads QEREEELKRQ…EAAGAQRPKN (75 aa). Positions 755-774 are enriched in polar residues; that stretch reads STPSPRAQNAPSLPSRTTCY.

Its subcellular location is the apical cell membrane. Its function is as follows. Binds to regulatory subunit (RII) of protein kinase A. May be involved in establishing polarity in signaling systems or in integrating PKA-RII isoforms with downstream effectors to capture, amplify and focus diffuse, trans-cellular signals carried by cAMP. Binds to and modulates the structure of the actin cytoskeleton. This Rattus norvegicus (Rat) protein is A-kinase anchor protein 2.